A 572-amino-acid polypeptide reads, in one-letter code: Triacylglycerol lipase OBL1 (572 aa).

Residues 110–130 (GYLVEFFLNLFSLNGNFLGLL) form a helical membrane-spanning segment. A disordered region spans residues 320-356 (IPPSESSKSSTSFSDSDAHTGSDLSSDSERPTDTRKK). The span at 323–334 (SESSKSSTSFSD) shows a compositional bias: low complexity. Positions 346 to 356 (DSERPTDTRKK) are enriched in basic and acidic residues. Residues 391–395 (GHSLG) carry the GXSXG motif. Catalysis depends on Ser393, which acts as the Nucleophile. Catalysis depends on charge relay system residues Asp457 and His550.

It belongs to the AB hydrolase superfamily. Lipase family. In terms of tissue distribution, expressed in pollen grains and pollen tubes.

It is found in the lipid droplet. It localises to the membrane. The catalysed reaction is 1,2-di-(9Z-octadecenoyl)-glycerol + (9Z)-octadecenoate + H(+) = 1,2,3-tri-(9Z-octadecenoyl)-glycerol + H2O. It carries out the reaction 1-(9Z-octadecenoyl)-glycerol + H2O = glycerol + (9Z)-octadecenoate + H(+). Acid lipase that can hydrolyze a range of triacylglycerols without a clear preference for acyl-chains. Can also cleave 1,2-diacylglycerol, 1,3-diacylglycerol and 1-monoacylglycerol, but not phosphatidylcholine, phosphatidylethanolamine, or sterol esters. Required for pollen tube growth. Triacylglycerol hydrolysis by OBL1 may provide acyl groups for the synthesis of membrane lipids in growing pollen tubes. The chain is Triacylglycerol lipase OBL1 from Nicotiana tabacum (Common tobacco).